Consider the following 164-residue polypeptide: IQSTSMDQGBLSEDSMNSFIRTLIQAGIWKNKVPKQTARTKDGTQTAVKKTKAEPDVVANKDRLGFQPIVSVDAELLRQQRRFSSPRVLLSENTPLEPPPLYLTEEPMGLNRTSRRKRFAEGKSHRGEYSVCDSESRWVTDKSSAVDIRGHQVTVLGEIRMGPS.

A signal peptide spans 1–3 (IQS). Residues 4–118 (TSMDQGBLSE…GLNRTSRRKR (115 aa)) constitute a propeptide that is removed on maturation. The disordered stretch occupies residues 89–126 (LLSENTPLEPPPLYLTEEPMGLNRTSRRKRFAEGKSHR). N-linked (GlcNAc...) asparagine glycosylation occurs at N111.

Belongs to the NGF-beta family.

It is found in the secreted. Its function is as follows. Seems to promote the survival of visceral and proprioceptive sensory neurons. The chain is Neurotrophin-3 (NTF3) from Cylindrophis ruffus (Red-tailed pipe snake).